The primary structure comprises 234 residues: Sugar fermentation stimulation protein A (234 aa).

The segment at residues 201 to 220 (LLSEAQNKGVEVLAYKAELS) is a DNA-binding region (H-T-H motif).

Belongs to the SfsA family.

Its function is as follows. Binds to DNA non-specifically. Could be a regulatory factor involved in maltose metabolism. The polypeptide is Sugar fermentation stimulation protein A (Salmonella agona (strain SL483)).